The sequence spans 170 residues: Transcriptional repressor NrdR (170 aa).

Residues 3-34 (CPFCRHPDSRVVDSRVTDDGTAIRRRRSCPEC) fold into a zinc finger. The 91-residue stretch at 46–136 (LSVIKRSGVI…VYRGFESLED (91 aa)) folds into the ATP-cone domain. The tract at residues 151-170 (ERSETVERGRPVPSRGVDDR) is disordered.

The protein belongs to the NrdR family. Zn(2+) is required as a cofactor.

In terms of biological role, negatively regulates transcription of bacterial ribonucleotide reductase nrd genes and operons by binding to NrdR-boxes. The chain is Transcriptional repressor NrdR from Acidothermus cellulolyticus (strain ATCC 43068 / DSM 8971 / 11B).